The chain runs to 112 residues: MNATILVKIITPLSIALEKQAKMVTMSGEEGMFGVLPSHVPMIVSLKAGLVQVYIDDMHKSENTYLISGGVTEVTANYINIATETAINVTNLSEVEIATKLLDLQKTLSDQH.

It belongs to the ATPase epsilon chain family. In terms of assembly, F-type ATPases have 2 components, CF(1) - the catalytic core - and CF(0) - the membrane proton channel. CF(1) has five subunits: alpha(3), beta(3), gamma(1), delta(1), epsilon(1). CF(0) has three main subunits: a, b and c.

It is found in the cell inner membrane. Functionally, produces ATP from ADP in the presence of a proton gradient across the membrane. The chain is ATP synthase epsilon chain (atpC) from Rickettsia conorii (strain ATCC VR-613 / Malish 7).